The primary structure comprises 515 residues: ATP synthase subunit alpha (515 aa).

An ATP-binding site is contributed by 171–178 (GDRQTGKT).

The protein belongs to the ATPase alpha/beta chains family. As to quaternary structure, F-type ATPases have 2 components, CF(1) - the catalytic core - and CF(0) - the membrane proton channel. CF(1) has five subunits: alpha(3), beta(3), gamma(1), delta(1), epsilon(1). CF(0) has three main subunits: a(1), b(2) and c(9-12). The alpha and beta chains form an alternating ring which encloses part of the gamma chain. CF(1) is attached to CF(0) by a central stalk formed by the gamma and epsilon chains, while a peripheral stalk is formed by the delta and b chains.

It localises to the cell inner membrane. The enzyme catalyses ATP + H2O + 4 H(+)(in) = ADP + phosphate + 5 H(+)(out). In terms of biological role, produces ATP from ADP in the presence of a proton gradient across the membrane. The alpha chain is a regulatory subunit. The protein is ATP synthase subunit alpha of Coxiella burnetii (strain CbuK_Q154) (Coxiella burnetii (strain Q154)).